Reading from the N-terminus, the 341-residue chain is tRNA N6-adenosine threonylcarbamoyltransferase (341 aa).

Fe cation-binding residues include H113 and H117. Residues 136-140, D169, G182, and N280 each bind substrate; that span reads IISGG. Residue D308 coordinates Fe cation.

It belongs to the KAE1 / TsaD family. Fe(2+) serves as cofactor.

The protein resides in the cytoplasm. The enzyme catalyses L-threonylcarbamoyladenylate + adenosine(37) in tRNA = N(6)-L-threonylcarbamoyladenosine(37) in tRNA + AMP + H(+). In terms of biological role, required for the formation of a threonylcarbamoyl group on adenosine at position 37 (t(6)A37) in tRNAs that read codons beginning with adenine. Is involved in the transfer of the threonylcarbamoyl moiety of threonylcarbamoyl-AMP (TC-AMP) to the N6 group of A37, together with TsaE and TsaB. TsaD likely plays a direct catalytic role in this reaction. The polypeptide is tRNA N6-adenosine threonylcarbamoyltransferase (Anaplasma marginale (strain St. Maries)).